The sequence spans 43 residues: Protein PsbN (43 aa).

The chain crosses the membrane as a helical span at residues 5-27; sequence TLIAISISGLLVSFTGYALYTAF.

It belongs to the PsbN family.

It is found in the plastid. The protein localises to the chloroplast thylakoid membrane. Its function is as follows. May play a role in photosystem I and II biogenesis. The sequence is that of Protein PsbN from Phaseolus vulgaris (Kidney bean).